Consider the following 514-residue polypeptide: Cytochrome P450 monooxygenase nodJ (514 aa).

Residues E2 to A24 traverse the membrane as a helical segment. N144, N245, and N416 each carry an N-linked (GlcNAc...) asparagine glycan. Heme is bound at residue C432.

This sequence belongs to the cytochrome P450 family. Heme serves as cofactor.

Its subcellular location is the membrane. It participates in secondary metabolite biosynthesis. Its function is as follows. Cytochrome P450 monooxygenase; part of the gene cluster that mediates the biosynthesis of the indole diterpenes nodulisporic acids (NA). Nodulisporic acid A (NAA) and its chemically modified derivatives are of particular significance because of their highly potent insecticidal activity against blood-feeding arthropods and lack of observable adverse effects on mammals, in particular the tremogenicity associated with the paspaline-derived IDTs is not observed. The geranylgeranyl diphosphate (GGPP) synthase ggs1, localized outside of the cluster, is proposed to catalyze the first step in nodulisporic acid biosynthesis via conversion of farnesyl pyrophosphate and isopentyl pyrophosphate into geranylgeranyl pyrophosphate (GGPP). Condensation of indole-3-glycerol phosphate with GGPP by the prenyl transferase nodC then forms 3-geranylgeranylindole (3-GGI). Epoxidation by the FAD-dependent monooxygenase nodM leads to a single-epoxidized-GGI that is substrate of the terpene cyclase nodB for cyclization to yield emindole SB. The terminal methyl carbon, C28, of emindole SB is then oxidized by the cytochrome P450 monooxygenase nodW to produce nodulisporic acid F (NAF), the pentacyclic core of NAA. NAF is converted to nodulisporic acid E (NAE) via prenylation. This step is probably performed by one of the indole diterpene prenyltransferases nodD1 or nodD2. Several oxidation steps performed by the FAD-linked oxidoreductase nodO and one of the cytochrome P450 monooxygenase nodR, nodX or nodZ further convert NAE to nodulisporic acid D (NAD). NAD is substrate of cytochrome P450 monooxygenase nodJ to produce the precursor of nodulisporic acid C (NAC), converted to NAC by one of the indole diterpene prenyltransferases nodD1 or nodD2. The FAD-dependent monooxygenase nodY2 then oxidizes NAC to nodulisporic acid B (NAB). Finally NAB is converted to NAA by one of the cytochrome P450 monooxygenases nodR, nodX or nodZ. In Hypoxylon pulicicidum, this protein is Cytochrome P450 monooxygenase nodJ.